Reading from the N-terminus, the 244-residue chain is Phosphate propanoyltransferase (244 aa).

52–54 (ISA) lines the CoA pocket. Zn(2+) is bound by residues His-56 and His-58. Residue Arg-106 coordinates CoA. Arg-112 is a binding site for phosphate. Zn(2+)-binding residues include Glu-118, His-166, His-168, and His-214. Asn-221 is a CoA binding site.

It belongs to the PduL family. In terms of assembly, full-length protein forms large oligomers. Possible homotrimer and monomer, when purified in the absence of the encapsulation peptide (EP, residues 1-20). The EP may influence oligomerization. It depends on Zn(2+) as a cofactor.

It is found in the bacterial microcompartment. The enzyme catalyses propanoyl-CoA + phosphate = propanoyl phosphate + CoA. Functionally, part of a bacterial microcompartment (BMC) locus required for growth on plant and algal sugars, including L-fucose and L-rhamnose. Thought to be active on lactyl-CoA in a lactaldehyde-degradation pathway. CoA is regenerated within the BMC via this enzyme, although there must also be cofactor transport across the BMC. Directly targeted to the BMC. The chain is Phosphate propanoyltransferase from Planctopirus limnophila (strain ATCC 43296 / DSM 3776 / IFAM 1008 / Mu 290) (Planctomyces limnophilus).